Here is a 2162-residue protein sequence, read N- to C-terminus: Calpain-type cysteine protease ADL1 (2162 aa).

The N-terminal stretch at 1–33 (MEEEEHRGVVLVCSICGFLFAVLGPLSFWILWA) is a signal peptide. Residues 34–70 (VNWRPWRLYSWIYARKWPAYVQGPQLSTLCSFFTLFA) are Extracellular-facing. A helical membrane pass occupies residues 71-91 (WLVVVSPITVLLVWGGILIAL). The Cytoplasmic portion of the chain corresponds to 92–95 (LERN). A helical membrane pass occupies residues 96–116 (IIGLAVIMVGVALLLSFYSIM). Over 117-127 (LWWRTQWQSSK) the chain is Extracellular. A helical transmembrane segment spans residues 128 to 148 (AVAYLLLLAVGLLCAYEFCAV). Topologically, residues 149 to 164 (YVTTGASASELNSPSG) are cytoplasmic. A helical transmembrane segment spans residues 165–185 (FFFGVSAISLAINMLFISKIL). Topologically, residues 186-236 (FNGSGFDVDEYVRRLYKFAYSDCVEVAPVSCSPDPPDPSELYMTKSSRVLH) are extracellular. A helical transmembrane segment spans residues 237–257 (LGLLYLCSLMVLVVYSILYGL). At 258–264 (TSKEARW) the chain is on the cytoplasmic side. Residues 265 to 285 (LGALTSVAVVILDWNLGLCSF) form a helical membrane-spanning segment. Residues 286–294 (RFELLKSRM) lie on the Extracellular side of the membrane. A helical membrane pass occupies residues 295 to 315 (IALFVAGTSRVFLICFGVHYW). The Cytoplasmic portion of the chain corresponds to 316 to 320 (YLGHC). Residues 321–341 (ISYAFVASVLLAAAVSCWLSI) form a helical membrane-spanning segment. Topologically, residues 342–626 (SNPSVARIDA…LMFHQVAGSP (285 aa)) are extracellular. A disordered region spans residues 366–403 (KGQTSSSNSSDGCGSSVKRSSGSVEAGPHGNATDSMYR). Positions 370–381 (SSSNSSDGCGSS) are enriched in low complexity. The chain crosses the membrane as a helical span at residues 627 to 647 (IRAFVVFTLIFIIETVTVAVH). The Cytoplasmic portion of the chain corresponds to 648-663 (RPKPIKVINATHEQFE). A helical membrane pass occupies residues 664–684 (FGFSILLLSPVVCSIMAFIWS). Residues 685-697 (LCAEEMTMTSKPR) lie on the Extracellular side of the membrane. A helical membrane pass occupies residues 698 to 718 (KYGFIAWLLSTCVGLLLSFLS). The Cytoplasmic portion of the chain corresponds to 719–722 (KSSV). Residues 723–743 (ILGLSLTVPLMVACLSFAIPI) form a helical membrane-spanning segment. Over 744-773 (WMRNGYRFWIPGGELDSRENIRQAPGKKER) the chain is Extracellular. Residues 774 to 794 (ALFAISITVFTASVIGLGAIV) traverse the membrane as a helical segment. Topologically, residues 795–825 (SAKPLDALGYKGWDADKKSFYSPYATSMYLG) are cytoplasmic. A helical membrane pass occupies residues 826–846 (WALSSTIAVLATGVIPIVAWF). Residues 847 to 856 (ATYRFSPSSA) are Extracellular-facing. A helical membrane pass occupies residues 857 to 877 (ICVGLFATVLVSFCGVSYWGV). Topologically, residues 878–890 (VNSRQDGVPLKAD) are cytoplasmic. The helical transmembrane segment at 891–911 (FLAALLPLLCIPAVFSLFTGM) threads the bilayer. The Extracellular segment spans residues 912–924 (YKWKDDDWKISRG). Residues 925-945 (VYLFVGMGVLLLLGAISAVIV) traverse the membrane as a helical segment. Residues 946-949 (TIRP) lie on the Cytoplasmic side of the membrane. The chain crosses the membrane as a helical span at residues 950–970 (WTVGVACLLVILFLVFAIGVI). Topologically, residues 971–984 (HYWTSNNFYLTRTQ) are extracellular. A helical transmembrane segment spans residues 985–1005 (MLLVCSLAFLLALAAFLMGLF). The Cytoplasmic segment spans residues 1006-1019 (QEKPFVGASIGYFS). The chain crosses the membrane as a helical span at residues 1020–1040 (FLFLLTGRALTVLLSPPIVVY). Residues 1041–1063 (SPRVLPVYVYDAHADSAKNVSYA) lie on the Extracellular side of the membrane. A helical transmembrane segment spans residues 1064 to 1084 (FLILYGIALATEVWGVIASLI). Residues 1085 to 2162 (LNPPFIGAAI…TKAPIKLEAV (1078 aa)) lie on the Cytoplasmic side of the membrane. A phosphoserine mark is found at serine 1372 and serine 1377. Residues 1418–1611 (TGRHCGEIDL…ICSAEYGLFD (194 aa)) enclose the Calpain catalytic 1 domain. At serine 1668 the chain carries Phosphoserine. Residues 1706–2008 (NFTDQEFPPD…FRSIYVCRVY (303 aa)) form the Calpain catalytic 2 domain. Residues cysteine 1772, histidine 1930, and asparagine 1950 contribute to the active site.

It belongs to the peptidase C2 family. In terms of processing, autocatalytic proteolytic cleavage leading to the production of mainly cytoplasmic localized subproducts of about 85 and 120 kDa. In terms of tissue distribution, ubiquitously expressed with higher levels in embryos, vasculatures, leaf primordia, leaf margins, and shoot apical meristem (SAM).

It is found in the endoplasmic reticulum membrane. Its subcellular location is the cytoplasm. It localises to the cell membrane. The protein localises to the endosome membrane. Essential protease involved in epiderm development. Required for aleurone cell development in the endosperm probably by maintaining and restricting the aleurone and embryonic epidermal L1 cell-layer fates as well as meristems organization. Involved in the maintenance of adaxial/abaxial axis information in developing leaves, probably by regulating cell proliferation and expansion. Does not need calcium ions to be active. The polypeptide is Calpain-type cysteine protease ADL1 (ADL1) (Oryza sativa subsp. japonica (Rice)).